Reading from the N-terminus, the 91-residue chain is Small ribosomal subunit protein bS20 (91 aa).

The segment covering 1–21 (MPLHKSAEKRLRQSARRNERN) has biased composition (basic and acidic residues). Disordered regions lie at residues 1 to 25 (MPLH…RARK) and 70 to 91 (PNKA…MKAE). Positions 70 to 79 (PNKASRKKSQ) are enriched in basic residues.

It belongs to the bacterial ribosomal protein bS20 family.

Its function is as follows. Binds directly to 16S ribosomal RNA. The chain is Small ribosomal subunit protein bS20 from Chlorobium phaeobacteroides (strain BS1).